A 262-amino-acid chain; its full sequence is Versicolorin reductase 1 (262 aa).

Ile21, Asp67, Asn94, and Arg127 together coordinate NADP(+). Active-site proton donor residues include Ser143 and Ser144. Positions 158, 162, 191, and 193 each coordinate NADP(+). Tyr158 (proton acceptor) is an active-site residue. Lys162 serves as the catalytic Lowers pKa of active site Tyr.

The protein belongs to the short-chain dehydrogenases/reductases (SDR) family.

The protein resides in the cytoplasm. It is found in the cytosol. The enzyme catalyses (4S,8R)-2,13,16,20-tetrahydroxy-7,9-dioxapentacyclo[10.8.0.0(3,10).0(4,8).0(14,19)]icosa-1(12),2,5,10,13,16,19-heptaen-18-one + NADPH + H(+) = (4S,8R,16R)-2,13,16,20-tetrahydroxy-7,9-dioxapentacyclo[10.8.0.0(3,10).0(4,8).0(14,19)]icosa-1(12),2,5,10,13,19-hexaen-18-one + NADP(+). The protein operates within mycotoxin biosynthesis; aflatoxin biosynthesis. Functionally, cytochrome P450 monooxygenase; part of the gene cluster that mediates the biosynthesis of aflatoxins, a group of polyketide-derived furanocoumarins, and part of the most toxic and carcinogenic compounds among the known mycotoxins. The four major aflatoxins produced by A.parasiticus are aflatoxin B1 (AFB1), aflatoxin B2 (AFB2), aflatoxin G1 (AFG1) and aflatoxin G2 (AFG2). Within the aflatoxin pathway, with the cytochrome P450 monooxygenase aflN, the versicolorin reductase aflM, is involved in conversion of VERA to demethylsterigmatocystin (DMST). The biosynthesis of aflatoxins begins with the norsolorinic acid synthase aflC that combines a hexanoyl starter unit produced by the fatty acid synthase aflA/aflB and 7 malonyl-CoA extender units to synthesize the precursor NOR. The second step is the conversion of NOR to averantin and requires the norsolorinic acid ketoreductase aflD, which catalyzes the dehydration of norsolorinic acid to form (1'S)-averantin. The norsolorinic acid reductases aflE and aflF may also play a role in the conversion of NOR to AVN. The cytochrome P450 monooxygenase aflG then catalyzes the hydroxylation of AVN to 5'hydroxyaverantin (HAVN). The next step is performed by the 5'-hydroxyaverantin dehydrogenase aflH that transforms HAVN to 5'-oxoaverantin (OAVN) which is further converted to averufin (AVF) by aflK that plays a dual role in the pathway, as a 5'-oxoaverantin cyclase that mediates conversion of 5'-oxoaverantin, as well as a versicolorin B synthase in a later step in the pathway. The averufin oxidase aflI catalyzes the conversion of AVF to versiconal hemiacetal acetate (VHA). VHA is then the substrate for the versiconal hemiacetal acetate esterase aflJ to yield versiconal (VAL). Versicolorin B synthase aflK then converts VAL to versicolorin B (VERB) by closing the bisfuran ring of aflatoxin which is required for DNA-binding, thus giving to aflatoxin its activity as a mutagen. Then, the activity of the versicolorin B desaturase aflL leads to versicolorin A (VERA). A branch point starts from VERB since it can also be converted to dihydrodemethylsterigmatocystin (DMDHST), probably also by aflL, VERA being a precursor for aflatoxins B1 and G1, and DMDHST for aflatoxins B2 and G2. Next, the versicolorin reductase aflM and the cytochrome P450 monooxygenase aflN are involved in conversion of VERA to demethylsterigmatocystin (DMST). AflX and aflY seem also involved in this step, through probable aflX-mediated epoxide ring-opening step following versicolorin A oxidation and aflY-mediated Baeyer-Villiger oxidation required for the formation of the xanthone ring. The methyltransferase aflO then leads to the modification of DMST to sterigmatocystin (ST), and of DMDHST to dihydrosterigmatocystin (DHST). Both ST and DHST are then substrates of the O-methyltransferase aflP to yield O-methylsterigmatocystin (OMST) and dihydro-O-methylsterigmatocystin (DHOMST), respectively. Finally OMST is converted to aflatoxins B1 and G1, and DHOMST to aflatoxins B2 and G2, via the action of several enzymes including O-methylsterigmatocystin oxidoreductase aflQ, the cytochrome P450 monooxygenase aflU, but also the NADH-dependent flavin oxidoreductase nadA which is specifically required for the synthesis of AFG1. The polypeptide is Versicolorin reductase 1 (Aspergillus parasiticus (strain ATCC 56775 / NRRL 5862 / SRRC 143 / SU-1)).